The sequence spans 217 residues: Somatotropin (217 aa).

Positions 1 to 27 (MMAAGPRASLLLAFALLCLPWTQEVGA) are cleaved as a signal peptide. Residue His-46 coordinates Zn(2+). A disulfide bond links Cys-79 and Cys-190. Ser-132 bears the Phosphoserine mark. A Zn(2+)-binding site is contributed by Glu-199. The cysteines at positions 207 and 215 are disulfide-linked.

It belongs to the somatotropin/prolactin family.

The protein localises to the secreted. Plays an important role in growth control. Its major role in stimulating body growth is to stimulate the liver and other tissues to secrete IGF1. It stimulates both the differentiation and proliferation of myoblasts. It also stimulates amino acid uptake and protein synthesis in muscle and other tissues. This is Somatotropin (GH1) from Cervus elaphus (Red deer).